The following is a 253-amino-acid chain: Large ribosomal subunit protein mL57 (253 aa).

Residues 1 to 28 constitute a mitochondrion transit peptide; it reads MENSMMFISRSLRRPVTALNCNLQSVRT.

It belongs to the ribonuclease III family. Mitochondrion-specific ribosomal protein mL57 subfamily. As to quaternary structure, component of the mitochondrial large ribosomal subunit (mt-LSU). Mature yeast 74S mitochondrial ribosomes consist of a small (37S) and a large (54S) subunit. The 37S small subunit contains a 15S ribosomal RNA (15S mt-rRNA) and 34 different proteins. The 54S large subunit contains a 21S rRNA (21S mt-rRNA) and 46 different proteins. mL57 forms a heterodimer with mL44 and stabilizes rRNA expansion segments 1/2 at a membrane-facing protuberance close to the point of attachment of the ribosome to the translocon in the membrane.

It is found in the mitochondrion. Functionally, component of the mitochondrial ribosome (mitoribosome), a dedicated translation machinery responsible for the synthesis of mitochondrial genome-encoded proteins, including at least some of the essential transmembrane subunits of the mitochondrial respiratory chain. The mitoribosomes are attached to the mitochondrial inner membrane and translation products are cotranslationally integrated into the membrane. The chain is Large ribosomal subunit protein mL57 (MRPL15) from Saccharomyces cerevisiae (strain ATCC 204508 / S288c) (Baker's yeast).